Here is a 477-residue protein sequence, read N- to C-terminus: Protoporphyrinogen oxidase (477 aa).

Residues 9 to 14 (GGGISG), 34 to 35 (ES), tryptophan 42, 57 to 60 (GPRG), valine 257, alanine 449, and 454 to 456 (VAV) contribute to the FAD site.

It belongs to the protoporphyrinogen/coproporphyrinogen oxidase family. Protoporphyrinogen oxidase subfamily. In terms of assembly, monomer. Homodimer. Requires FAD as cofactor. Expressed in heart, brain, placenta, lung, liver, skeletal muscle, kidney and pancreas.

Its subcellular location is the mitochondrion inner membrane. It catalyses the reaction protoporphyrinogen IX + 3 O2 = protoporphyrin IX + 3 H2O2. It functions in the pathway porphyrin-containing compound metabolism; protoporphyrin-IX biosynthesis; protoporphyrin-IX from protoporphyrinogen-IX: step 1/1. In terms of biological role, catalyzes the 6-electron oxidation of protoporphyrinogen-IX to form protoporphyrin-IX. This Homo sapiens (Human) protein is Protoporphyrinogen oxidase (PPOX).